We begin with the raw amino-acid sequence, 242 residues long: Cysteine-rich venom protein VAR11 (242 aa).

The signal sequence occupies residues 1–19 (MILLKLYLTLAAILCQSRG). An SCP domain is found at 41-169 (NKHNDLRRTV…SLKYFQVCQY (129 aa)). Cystine bridges form between Cys-77-Cys-156, Cys-95-Cys-170, Cys-151-Cys-167, Cys-189-Cys-196, Cys-192-Cys-201, Cys-205-Cys-237, Cys-214-Cys-231, and Cys-223-Cys-235. In terms of domain architecture, ShKT spans 205-237 (CAYNDDYTSCPDLTKQVGCNHPVTANCKASCQC).

It belongs to the CRISP family. In terms of tissue distribution, expressed by the venom gland.

The protein resides in the secreted. Its function is as follows. Blocks ryanodine receptors, and potassium channels. In Varanus varius (Lace monitor lizard), this protein is Cysteine-rich venom protein VAR11.